A 273-amino-acid polypeptide reads, in one-letter code: HMP-PP phosphatase (273 aa).

Asp-8 functions as the Nucleophile in the catalytic mechanism. Mg(2+)-binding residues include Asp-8, Asp-10, and Asp-212.

This sequence belongs to the HAD-like hydrolase superfamily. Cof family. Mg(2+) is required as a cofactor.

It catalyses the reaction 4-amino-2-methyl-5-(diphosphooxymethyl)pyrimidine + H2O = 4-amino-2-methyl-5-(phosphooxymethyl)pyrimidine + phosphate + H(+). Catalyzes the hydrolysis of 4-amino-2-methyl-5-hydroxymethylpyrimidine pyrophosphate (HMP-PP) to 4-amino-2-methyl-5-hydroxymethylpyrimidine phosphate (HMP-P). The polypeptide is HMP-PP phosphatase (Yersinia pseudotuberculosis serotype I (strain IP32953)).